A 148-amino-acid polypeptide reads, in one-letter code: Lysozyme C (148 aa).

Positions 1–18 (MKAVIILGLVLLSVTVQG) are cleaved as a signal peptide. The region spanning 19-148 (KIFERCELAR…VSQYVQGCGV (130 aa)) is the C-type lysozyme domain. 4 disulfide bridges follow: Cys-24–Cys-146, Cys-48–Cys-134, Cys-83–Cys-99, and Cys-95–Cys-113. Catalysis depends on residues Glu-53 and Asp-71.

The protein belongs to the glycosyl hydrolase 22 family. Monomer.

Its subcellular location is the secreted. The enzyme catalyses Hydrolysis of (1-&gt;4)-beta-linkages between N-acetylmuramic acid and N-acetyl-D-glucosamine residues in a peptidoglycan and between N-acetyl-D-glucosamine residues in chitodextrins.. In terms of biological role, lysozymes have primarily a bacteriolytic function; those in tissues and body fluids are associated with the monocyte-macrophage system and enhance the activity of immunoagents. In Macaca mulatta (Rhesus macaque), this protein is Lysozyme C (LYZ).